A 446-amino-acid polypeptide reads, in one-letter code: MITIKKGLDLPIAGAPSQVINDGKSITKVALLGEEYVGMRPTMHVRVGDEVKKAQVLFEDKKNPGVKFTSPVSGKVIEVNRGAKRVLQSVVIEVAGDEQVTFDKFEASQLAGLDREVIKTQLVESGLWTALRTRPFSKVPAIESTTKAIFVTAMDTNPLAAKPELIINEQAEAFVAGLDVLSALTEEKVYVCKSGTSLPRSSQSNVEEHVFDGPHPAGLAGTHMHFLYPVNANNVAWSINYQDVIAFGQLFLTGELFTDRVVSLAGPVVNNPRLVRTIMGASLDELTDSEMMPGEVRVISGSVLTGTHATGPHAYLGRYHLQVSVLREGRDKELFGWATPGKNKFSVTRSFLGHLFKGQLFNMTTTTNGSDRAMVPIGNYERVVPLDMEPTLLLRDLCAGDTDSAQALGALELDEEDLALCTFVCPGKYEYGQLLRDCLNTIEKEG.

Belongs to the NqrA family. In terms of assembly, composed of six subunits; NqrA, NqrB, NqrC, NqrD, NqrE and NqrF.

It carries out the reaction a ubiquinone + n Na(+)(in) + NADH + H(+) = a ubiquinol + n Na(+)(out) + NAD(+). In terms of biological role, NQR complex catalyzes the reduction of ubiquinone-1 to ubiquinol by two successive reactions, coupled with the transport of Na(+) ions from the cytoplasm to the periplasm. NqrA to NqrE are probably involved in the second step, the conversion of ubisemiquinone to ubiquinol. The sequence is that of Na(+)-translocating NADH-quinone reductase subunit A from Vibrio vulnificus (strain CMCP6).